Here is a 77-residue protein sequence, read N- to C-terminus: Putative regulatory protein tsl2331 (77 aa).

It belongs to the RemA family.

This chain is Putative regulatory protein tsl2331, found in Thermosynechococcus vestitus (strain NIES-2133 / IAM M-273 / BP-1).